The sequence spans 423 residues: MLDTLLINIGQLLTMDQEDGLLRREAMNTLPVIENGAVGIENGVITFVGTAEEAKGLQAKEVIDCGGKMVSPGLVDPHTHLVFGGSRENEIALKLQGVPYLEILEQGGGILSTVNATKQASKEELVQKAKFHLDRMLSFGVTTVEAKSGYGLDDETEWKQLEATAQLQKEHPIDLVSTFLGAHAVPKEYKGRSKEFLQWMLDLLPEMKEKQLAEFVDIFCETGVFSVEESKEFLLKAKELGFDVKIHADEIDPLGGAEAAAEIGAASADHLVGASDKGIEMLANSNTVATLLPGTTFYLNKESFARGRKMIDEGVAVALATDFNPGSCPTENIQLIMSIAMLKLKMTPEEVWNAVTVNSSYAINRGDVAGKIRVGRKADLVLWDAYNYAYVPYHYGVSHVNTVWKNGNIAYTRGEQSWSTATI.

Fe(3+) contacts are provided by His78 and His80. The Zn(2+) site is built by His78 and His80. Arg87, Tyr150, and His183 together coordinate 4-imidazolone-5-propanoate. Tyr150 serves as a coordination point for N-formimidoyl-L-glutamate. His247 contacts Fe(3+). Residue His247 participates in Zn(2+) binding. Glu250 lines the 4-imidazolone-5-propanoate pocket. Asp322 contacts Fe(3+). Residue Asp322 participates in Zn(2+) binding. Asn324 and Gly326 together coordinate N-formimidoyl-L-glutamate. Residue Ser327 participates in 4-imidazolone-5-propanoate binding.

It belongs to the metallo-dependent hydrolases superfamily. HutI family. Zn(2+) serves as cofactor. Requires Fe(3+) as cofactor.

Its subcellular location is the cytoplasm. It catalyses the reaction 4-imidazolone-5-propanoate + H2O = N-formimidoyl-L-glutamate. It participates in amino-acid degradation; L-histidine degradation into L-glutamate; N-formimidoyl-L-glutamate from L-histidine: step 3/3. Its function is as follows. Catalyzes the hydrolytic cleavage of the carbon-nitrogen bond in imidazolone-5-propanoate to yield N-formimidoyl-L-glutamate. It is the third step in the universal histidine degradation pathway. This is Imidazolonepropionase from Bacillus anthracis (strain A0248).